Consider the following 730-residue polypeptide: Catalase R (730 aa).

The active site involves histidine 105. Residue tyrosine 392 participates in heme binding. Residues 403–433 (PNFEQIPVNRPRKPVHNNNRDGFGQQQIPTN) are disordered.

This sequence belongs to the catalase family. It depends on heme as a cofactor.

The catalysed reaction is 2 H2O2 = O2 + 2 H2O. Occurs in almost all aerobically respiring organisms and serves to protect cells from the toxic effects of hydrogen peroxide. The sequence is that of Catalase R (catR) from Aspergillus niger.